The following is a 31-amino-acid chain: Cycloviolacin-O6 (31 aa).

The cyclopeptide (Gly-Asn) cross-link spans 1-31 (GTLPCGESCVWIPCISAAVGCSCKSKVCYKN). 3 cysteine pairs are disulfide-bonded: cysteine 5/cysteine 21, cysteine 9/cysteine 23, and cysteine 14/cysteine 28.

This is a cyclic peptide.

Functionally, probably participates in a plant defense mechanism. In Viola odorata (Sweet violet), this protein is Cycloviolacin-O6.